The sequence spans 151 residues: uncharacterized protein (151 aa).

The segment at M1–Q24 is disordered.

This is an uncharacterized protein from Acanthamoeba polyphaga mimivirus (APMV).